Consider the following 688-residue polypeptide: MTTQNFLAEIGTEELPPKALKKLATAFAENVEQELNQAGLAFEKVEWFAAPRRLAVKVLGLAEAQPSKQVEKRGPAVSAAFDAEGKPTKAAEGWARGCGITVEQAERLSTDKGEWLVHRAVIEGQLTKNLLVGIIDKALAGLPIPKTMRWGDKTEQFVRPVHTVTLLFGADLIEGEILGVASGRTVRGHRFLGEREFSLDHADQYPQLLKERGSVVADFNERKALILATSREKATALGGVADIEEELLEEVTSLVEYPNVLTAKFEERFLAVPAEALVYTMKGDQKYFPIYDKDGKLLPHFIFVSNINPDDPSKIIEGNEKVVRPRLTDAEFFFKTDLKQKLEDRLPRLETVLFQQQLGTLRDKTARIEALAGEIAAQIGADQTKAKRAGLLSKCDLMTNMVFEFTDTQGVMGMHYARHDGEDEDVAVALNEQYMPRFAGDTLPNSLVACSVALADKIDTLTGIFGIGQSPKGSADPFALRRAALGCLRIIVEKNLPLDLADIVAKATALFGDKLTNKNVVDEVVDFMLGRFRAWYESEGIAVDVIQSVLARRPTKPADFDARVRAVSHFRTLDSAEALAAANKRVSNILAKADIAIGEIDLGVCVESAEKTLAEAVLALKGEVQPLIAQGDYTAVLDKLANLRQPIDAFFDGVMVNVEEQTLRQNRLAILSTLQNLFLQVADISVLQ.

Belongs to the class-II aminoacyl-tRNA synthetase family. As to quaternary structure, tetramer of two alpha and two beta subunits.

The protein resides in the cytoplasm. The catalysed reaction is tRNA(Gly) + glycine + ATP = glycyl-tRNA(Gly) + AMP + diphosphate. In Histophilus somni (strain 129Pt) (Haemophilus somnus), this protein is Glycine--tRNA ligase beta subunit.